The sequence spans 207 residues: Outer-membrane lipoprotein LolB (207 aa).

Positions 1–23 are cleaved as a signal peptide; the sequence is MPTMNRSRRLALLCLGAPLLLAA. A lipid anchor (N-palmitoyl cysteine) is attached at Cys24. Cys24 carries the S-diacylglycerol cysteine lipid modification. The interval 171-207 is disordered; sequence PSASQAPAPRPRRIDLEREGGPTPLAVKLVIDPEEAP.

The protein belongs to the LolB family. In terms of assembly, monomer.

It is found in the cell outer membrane. Its function is as follows. Plays a critical role in the incorporation of lipoproteins in the outer membrane after they are released by the LolA protein. In Cupriavidus pinatubonensis (strain JMP 134 / LMG 1197) (Cupriavidus necator (strain JMP 134)), this protein is Outer-membrane lipoprotein LolB.